The following is a 426-amino-acid chain: 3-phosphoshikimate 1-carboxyvinyltransferase (426 aa).

3-phosphoshikimate-binding residues include Lys21, Ser22, and Arg26. Residue Lys21 participates in phosphoenolpyruvate binding. Phosphoenolpyruvate contacts are provided by Gly92 and Arg122. The 3-phosphoshikimate site is built by Ser167, Ser168, Gln169, Ser195, Asp315, and Lys342. Residue Gln169 coordinates phosphoenolpyruvate. Asp315 functions as the Proton acceptor in the catalytic mechanism. Arg346 and Arg386 together coordinate phosphoenolpyruvate.

The protein belongs to the EPSP synthase family. In terms of assembly, monomer.

It localises to the cytoplasm. The catalysed reaction is 3-phosphoshikimate + phosphoenolpyruvate = 5-O-(1-carboxyvinyl)-3-phosphoshikimate + phosphate. Its pathway is metabolic intermediate biosynthesis; chorismate biosynthesis. Functionally, catalyzes the transfer of the enolpyruvyl moiety of phosphoenolpyruvate (PEP) to the 5-hydroxyl of shikimate-3-phosphate (S3P) to produce enolpyruvyl shikimate-3-phosphate and inorganic phosphate. The chain is 3-phosphoshikimate 1-carboxyvinyltransferase from Methanosphaera stadtmanae (strain ATCC 43021 / DSM 3091 / JCM 11832 / MCB-3).